A 183-amino-acid chain; its full sequence is MHLLPELASHHAVSIPELLVSRDERQARQHVWLKRHPVPLVSFTVVAPGPIKDSEVTRRIFNHGVTALRALAAKQGWQIQEQAALVSASGPEGMLSIAAPARDLKLATIELEHSHPLGRLWDIDVLTPEGEILSRRDYSLPPRSCLLCEQSAAVCARGKTHQLTDLLNRMEALLNDVDACNVN.

This sequence belongs to the CitX family.

The catalysed reaction is apo-[citrate lyase ACP] + 2'-(5''-triphospho-alpha-D-ribosyl)-3'-dephospho-CoA = holo-[citrate lyase ACP] + diphosphate. Functionally, transfers 2-(5''-triphosphoribosyl)-3'-dephosphocoenzyme-A on a serine residue to the apo-acyl carrier protein (gamma chain) of the citrate lyase to yield holo-acyl carrier protein. The polypeptide is Apo-citrate lyase phosphoribosyl-dephospho-CoA transferase (Escherichia coli O139:H28 (strain E24377A / ETEC)).